The sequence spans 891 residues: Shieldin complex subunit 2 (891 aa).

Positions methionine 1–glutamate 61 are sufficient for interaction with SHLD3 and MAD2L2. The interval methionine 1 to leucine 542 is interaction with ASTE1. Disordered stretches follow at residues methionine 184–aspartate 222, asparagine 260–serine 294, and asparagine 333–lysine 357. Residues proline 192 to aspartate 222 are compositionally biased toward basic and acidic residues. Polar residues-rich tracts occupy residues asparagine 260–valine 271 and leucine 342–tryptophan 354. Residues lysine 695–cysteine 866 form a mediates interaction with SHLD1 region.

The protein belongs to the SHLD2 family. In terms of assembly, component of the shieldin complex, consisting of SHLD1, SHLD2, SHLD3 and MAD2L2/REV7. Within the complex, SHLD2 forms a scaffold which interacts with a SHLD3-MAD2L2 subcomplex via its N-terminus, and with SHLD1 via its C-terminus. Interacts with TP53BP1. Interacts with RIF1. Interacts with ASTE1.

It localises to the chromosome. Its function is as follows. Component of the shieldin complex, which plays an important role in repair of DNA double-stranded breaks (DSBs). During G1 and S phase of the cell cycle, the complex functions downstream of TP53BP1 to promote non-homologous end joining (NHEJ) and suppress DNA end resection. Mediates various NHEJ-dependent processes including immunoglobulin class-switch recombination, and fusion of unprotected telomeres. This is Shieldin complex subunit 2 from Mus musculus (Mouse).